Reading from the N-terminus, the 293-residue chain is Putative serine protease 42 (293 aa).

A signal peptide spans 1–26 (MSSGGGSRGLLAWLLLLQPWPGQNWA). Positions 33-60 (LPSPLLSEEGGENPEASPAPGPEAGPPL) are disordered. The Peptidase S1 domain maps to 80–293 (IVGGVDAEEG…IVSWGIGCGR (214 aa)). The cysteines at positions 105 and 121 are disulfide-linked. H120 functions as the Charge relay system in the catalytic mechanism. N-linked (GlcNAc...) asparagine glycosylation is present at N141. The active-site Charge relay system is the D166. N177 is a glycosylation site (N-linked (GlcNAc...) asparagine). Cystine bridges form between C200-C273, C232-C253, and C263-C291. S267 functions as the Charge relay system in the catalytic mechanism. N276 is a glycosylation site (N-linked (GlcNAc...) asparagine).

It belongs to the peptidase S1 family.

It localises to the cytoplasm. Its subcellular location is the cell membrane. Functionally, plays a role in spermatogenesis. Involved in germ cell survival during meiosis. The chain is Putative serine protease 42 from Homo sapiens (Human).